The chain runs to 235 residues: 7-cyano-7-deazaguanine synthase (235 aa).

ATP is bound at residue 9-19; it reads FSGGQDSTTCL. Zn(2+)-binding residues include Cys-197, Cys-212, Cys-215, and Cys-218.

This sequence belongs to the QueC family. It depends on Zn(2+) as a cofactor.

The catalysed reaction is 7-carboxy-7-deazaguanine + NH4(+) + ATP = 7-cyano-7-deazaguanine + ADP + phosphate + H2O + H(+). It functions in the pathway purine metabolism; 7-cyano-7-deazaguanine biosynthesis. Functionally, catalyzes the ATP-dependent conversion of 7-carboxy-7-deazaguanine (CDG) to 7-cyano-7-deazaguanine (preQ(0)). In Polaromonas sp. (strain JS666 / ATCC BAA-500), this protein is 7-cyano-7-deazaguanine synthase.